A 247-amino-acid polypeptide reads, in one-letter code: Carboxy-S-adenosyl-L-methionine synthase (247 aa).

S-adenosyl-L-methionine contacts are provided by residues Y40, 65–67 (GSS), 90–91 (DN), 122–123 (DI), N137, and R204.

This sequence belongs to the class I-like SAM-binding methyltransferase superfamily. Cx-SAM synthase family. As to quaternary structure, homodimer.

The catalysed reaction is prephenate + S-adenosyl-L-methionine = carboxy-S-adenosyl-L-methionine + 3-phenylpyruvate + H2O. Its function is as follows. Catalyzes the conversion of S-adenosyl-L-methionine (SAM) to carboxy-S-adenosyl-L-methionine (Cx-SAM). This is Carboxy-S-adenosyl-L-methionine synthase from Pseudomonas syringae pv. syringae (strain B728a).